Here is a 140-residue protein sequence, read N- to C-terminus: MADVDESDLKILEILRKNARTPYTSIAKELKISEAAVRKRIEKLIKMGVIKRFTIDYELENEIRAIVMVKTNPQIPTPEISKKIIKIQGVEFVYETTGDYDILTVVRGTNISSINKTIDDIRSLQGVLSTNSTIVLRVWF.

Residues 4-67 (VDESDLKILE…ELENEIRAIV (64 aa)) form the HTH asnC-type domain. A DNA-binding region (H-T-H motif) is located at residues 23 to 42 (YTSIAKELKISEAAVRKRIE).

In terms of assembly, homotetramer.

Its subcellular location is the cytoplasm. The protein operates within amino-acid biosynthesis; L-lysine biosynthesis via AAA pathway [regulation]. In terms of biological role, in the absence or at low concentrations of lysine, activates the biosynthesis of this amino acid via the alpha-aminoadipate (AAA) pathway. The protein is HTH-type transcriptional regulator LysM (lysM) of Sulfurisphaera tokodaii (strain DSM 16993 / JCM 10545 / NBRC 100140 / 7) (Sulfolobus tokodaii).